We begin with the raw amino-acid sequence, 324 residues long: E3 ubiquitin-protein ligase SIAH2 (324 aa).

Polar residues predominate over residues 1-15; that stretch reads MSRPSSTGPSANKPC. A disordered region spans residues 1–42; sequence MSRPSSTGPSANKPCSKQPPPQPQHTPSPAAPPAAATISAAG. Serine 6 is subject to Phosphoserine. At serine 16 the chain carries Phosphoserine; by DYRK2. Residues 17-32 show a composition bias toward pro residues; that stretch reads KQPPPQPQHTPSPAAP. Residue threonine 26 is modified to Phosphothreonine; by DYRK2. Serine 28 is subject to Phosphoserine; by DYRK2 and MAPK14. The segment covering 33–42 has biased composition (low complexity); that stretch reads PAAATISAAG. Residue serine 68 is modified to Phosphoserine; by DYRK2. The segment at 80 to 115 adopts an RING-type zinc-finger fold; sequence CPVCFDYVLPPILQCQAGHLVCNQCRQKLSCCPTCR. Threonine 119 bears the Phosphothreonine; by DYRK2 mark. Positions 130–322 are SBD; that stretch reads VASAVLFPCK…LGINVTISTC (193 aa). The segment at 133 to 193 adopts an SIAH-type zinc-finger fold; that stretch reads AVLFPCKYAT…VMSHLMHAHK (61 aa). Residues cysteine 138, cysteine 145, histidine 157, cysteine 161, cysteine 168, cysteine 175, histidine 187, and histidine 192 each coordinate Zn(2+).

This sequence belongs to the SINA (Seven in absentia) family. Homodimer. Interacts with UBE2E2. Interacts with PEG3. Interacts with VAV1, without mediating its ubiquitin-mediated degradation. Interacts with CACYBP/SIP. Probable component of some large E3 complex possibly composed of UBE2D1, SIAH2, CACYBP/SIP, SKP1, APC and TBL1X. Interacts with PEG10, which may inhibit its activity. Interacts with EGLN2 and SNCAIP. Interacts with DYRK2. Interacts with NR1D1 and NR1D2. Interacts with DCC. Interacts with AXIN1. Phosphorylated at Ser-28 by MAPK14, which mediates the degradation by the proteasome of EGLN3. Phosphorylated at Ser-28 by DYRK2; this increases the ubiquitin ligase activity and promotes degradation of EGLN3. As to expression, widely expressed at low level.

The protein localises to the cytoplasm. Its subcellular location is the nucleus. It catalyses the reaction S-ubiquitinyl-[E2 ubiquitin-conjugating enzyme]-L-cysteine + [acceptor protein]-L-lysine = [E2 ubiquitin-conjugating enzyme]-L-cysteine + N(6)-ubiquitinyl-[acceptor protein]-L-lysine.. Its pathway is protein modification; protein ubiquitination. With respect to regulation, inhibited by interaction with SNCAIP (isoform 2, but not isoform 1). May be inhibited by interaction with PEG10. In terms of biological role, E3 ubiquitin-protein ligase that mediates ubiquitination and subsequent proteasomal degradation of target proteins. E3 ubiquitin ligases accept ubiquitin from an E2 ubiquitin-conjugating enzyme in the form of a thioester and then directly transfers the ubiquitin to targeted substrates. Mediates E3 ubiquitin ligase activity either through direct binding to substrates or by functioning as the essential RING domain subunit of larger E3 complexes. Triggers the ubiquitin-mediated degradation of many substrates, including proteins involved in transcription regulation (GPS2, POU2AF1, PML, NCOR1), a cell surface receptor (DCC), an antiapoptotic protein (BAG1), and a protein involved in synaptic vesicle function in neurons (SYP). Mediates ubiquitination and proteasomal degradation of DYRK2 in response to hypoxia. It is thereby involved in apoptosis, tumor suppression, cell cycle, transcription and signaling processes. Has some overlapping function with SIAH1. Triggers the ubiquitin-mediated degradation of TRAF2, whereas SIAH1 does not. Promotes monoubiquitination of SNCA. Regulates cellular clock function via ubiquitination of the circadian transcriptional repressors NR1D1 and NR1D2 leading to their proteasomal degradation. Plays an important role in mediating the rhythmic degradation/clearance of NR1D1 and NR1D2 contributing to their circadian profile of protein abundance. Mediates ubiquitination and degradation of EGLN2 and EGLN3 in response to the unfolded protein response (UPR), leading to their degradation and subsequent stabilization of ATF4. Also part of the Wnt signaling pathway in which it mediates the Wnt-induced ubiquitin-mediated proteasomal degradation of AXIN1. This chain is E3 ubiquitin-protein ligase SIAH2 (SIAH2), found in Homo sapiens (Human).